Consider the following 447-residue polypeptide: MESAITISNHVNLAFSLSRNPSLSTKNSAGISCIKWQRPCLRNLGHVRLNQQRKGTRRKSTLVQAVAVPVAQPSAFPPTDNTEHLKQLAERYGFQQIGEPLPDDVTMRDIITSLPKQVFEINDTKAWGTVLISVTSYALGIFMIAKAPWYLLPLAWAWTGTAITGFFVIGHDCAHKSFSKNKLVEDIVGTLAFMPLIYPYEPWRFKHDQHHTKTNMLREDTAWLPIMKEDIESSPGLRKALIYAYGPLRTWMSIAHWLKVHFNLKDFRQSEVKRATISLAAVFAFMVIGWPLIIYKTGIVGWIKFWLMPWLGYHFWMSTFTIVHHTAPHIPFKSSKEWNAAQAQLSGTVHCDYPRWIEILCHDISVHIPHHISPKIPSYNLRAANQSLNENWGEYLNKPKSNWRLMRTIMTTCHIYDKDGNYVSFEKAVPEESQPISIPKRVMPDYA.

A chloroplast-targeting transit peptide spans 1 to 65 (MESAITISNH…TRRKSTLVQA (65 aa)). At valine 66 the chain carries N-acetylvaline. Positions 171–175 (HDCAH) match the Histidine box-1 motif. The Histidine box-2 signature appears at 207–211 (HDQHH). Positions 367–371 (HIPHH) match the Histidine box-3 motif.

The protein belongs to the fatty acid desaturase type 1 family.

Its subcellular location is the plastid. It is found in the chloroplast membrane. It catalyses the reaction a (9Z)-octadecenoyl-containing glycerolipid + 2 reduced [2Fe-2S]-[ferredoxin] + O2 + 2 H(+) = a (9Z,12Z)-octadecadienoyl-containing glycerolipid + 2 oxidized [2Fe-2S]-[ferredoxin] + 2 H2O. The protein operates within lipid metabolism; polyunsaturated fatty acid biosynthesis. Functionally, chloroplast omega-6 fatty acid desaturase introduces the second double bond in the biosynthesis of 16:3 and 18:3 fatty acids, important constituents of plant membranes. It is thought to use ferredoxin as an electron donor and to act on fatty acids esterified to galactolipids, sulfolipids and phosphatidylglycerol. The protein is Omega-6 fatty acid desaturase, chloroplastic of Spinacia oleracea (Spinach).